The sequence spans 126 residues: Large ribosomal subunit protein bL20 (126 aa).

Over residues 1 to 15 the composition is skewed to basic residues; sequence MARVKRAVNAQKKRR. The interval 1–20 is disordered; sequence MARVKRAVNAQKKRRTTLER.

Belongs to the bacterial ribosomal protein bL20 family.

Binds directly to 23S ribosomal RNA and is necessary for the in vitro assembly process of the 50S ribosomal subunit. It is not involved in the protein synthesizing functions of that subunit. This is Large ribosomal subunit protein bL20 from Beutenbergia cavernae (strain ATCC BAA-8 / DSM 12333 / CCUG 43141 / JCM 11478 / NBRC 16432 / NCIMB 13614 / HKI 0122).